The primary structure comprises 449 residues: Maltoporin (449 aa).

An N-terminal signal peptide occupies residues 1–24 (MITLRKLPLAVAVAAGVMSAQAMA).

It belongs to the porin LamB (TC 1.B.3) family. In terms of assembly, homotrimer formed of three 18-stranded antiparallel beta-barrels, containing three independent channels.

It is found in the cell outer membrane. The enzyme catalyses beta-maltose(in) = beta-maltose(out). Involved in the transport of maltose and maltodextrins. This Citrobacter koseri (strain ATCC BAA-895 / CDC 4225-83 / SGSC4696) protein is Maltoporin.